Reading from the N-terminus, the 313-residue chain is Ribosomal protein L11 methyltransferase (313 aa).

4 residues coordinate S-adenosyl-L-methionine: Thr164, Gly185, Asp207, and Asn249.

This sequence belongs to the methyltransferase superfamily. PrmA family.

Its subcellular location is the cytoplasm. The catalysed reaction is L-lysyl-[protein] + 3 S-adenosyl-L-methionine = N(6),N(6),N(6)-trimethyl-L-lysyl-[protein] + 3 S-adenosyl-L-homocysteine + 3 H(+). Functionally, methylates ribosomal protein L11. The sequence is that of Ribosomal protein L11 methyltransferase from Clostridium perfringens (strain 13 / Type A).